We begin with the raw amino-acid sequence, 4513 residues long: Dynein-1-beta heavy chain, flagellar inner arm I1 complex (4513 aa).

Positions 1-1806 (MEPGDEGKGH…IVKQVLSVFY (1806 aa)) are stem. Coiled-coil stretches lie at residues 192–223 (KAAA…NQQD), 1544–1577 (TAQG…RQQF), and 1704–1727 (THEC…LKKK). AAA regions lie at residues 1807–2028 (YGYE…PIAR), 2089–2350 (RAIE…VPEN), 2458–2706 (FKPA…IIQG), and 2808–3059 (DYAL…LKRR). Residues 1845-1852 (GPAGTGKT), 2127-2134 (GRTGSGKS), 2497-2504 (GNVGVGKT), and 2848-2855 (GVGGSGRK) each bind ATP. Coiled-coil stretches lie at residues 3107 to 3193 (AAMK…LTKK), 3301 to 3384 (KRAK…SISE), and 3499 to 3519 (RLKV…NAIQ). A stalk region spans residues 3107-3384 (AAMKKVAEEK…RVRWEASISE (278 aa)). 2 AAA regions span residues 3443–3674 (LANP…EVNA) and 3890–4109 (ATTY…LLKS).

As to quaternary structure, the I1 inner arm complex (also known as the f dynein complex) is a two-headed isoform composed of two heavy chains (1-alpha and 1-beta), three intermediate chains and three light chains. I1 occupies a specific position proximal to the first radial spoke and repeats every 96 nm along the length of the axoneme.

Its subcellular location is the cell projection. The protein localises to the cilium. The protein resides in the flagellum. It is found in the cytoplasm. It localises to the cytoskeleton. Its subcellular location is the flagellum axoneme. Force generating protein of eukaryotic cilia and flagella. Produces force towards the minus ends of microtubules. Dynein has ATPase activity; the force-producing power stroke is thought to occur on release of ADP. Required for assembly of the I1 inner arm complex and its targeting to the appropriate axoneme location. Also required for phototaxis. This Chlamydomonas reinhardtii (Chlamydomonas smithii) protein is Dynein-1-beta heavy chain, flagellar inner arm I1 complex (DHC10).